We begin with the raw amino-acid sequence, 1695 residues long: MCVLFSLLLLASVFSLGQTTWGVSSPKNVQGLSGSCLLIPCIFSYPADVPVSNGITAIWYYDYSGKRQVVIHSGDPKLVDKRFRGRAELMGNMDHKVCNLLLKDLKPEDSGTYNFRFEISDSNRWLDVKGTTVTVTTDPSPPTITIPEELREGMERNFNCSTPYLCLQEKQVSLQWRGQDPTHSVTSSFQSLEPTGVYHQTTLHMALSWQDHGRTLLCQFSLGAHSSRKEVYLQVPHAPKGVEILLSSSGRNILPGDPVTLTCRVNSSYPAVSAVQWARDGVNLGVTGHVLRLFSAAWNDSGAYTCQATNDMGSLVSSPLSLHVFMAEVKMNPAGPVLENETVTLLCSTPKEAPQELRYSWYKNHILLEDAHASTLHLPAVTRADTGFYFCEVQNAQGSERSSPLSVVVRYPPLTPDLTTFLETQAGLVGILHCSVVSEPLATVVLSHGGLTLASNSGENDFNPRFRISSAPNSLRLEIRDLQPADSGEYTCLAVNSLGNSTSSLDFYANVARLLINPSAEVVEGQAVTLSCRSGLSPAPDTRFSWYLNGALLLEGSSSSLLLPAASSTDAGSYYCRTQAGPNTSGPSLPTVLTVFYPPRKPTFTARLDLDTSGVGDGRRGILLCHVDSDPPAQLRLLHKGHVVATSLPSRCGSCSQRTKVSRTSNSLHVEIQKPVLEDEGVYLCEASNTLGNSSAAASFNAKATVLVITPSNTLREGTEANLTCNVNQEVAVSPANFSWFRNGVLWTQGSLETVRLQPVARTDAAVYACRLLTEDGAQLSAPVVLSVLYAPDPPKLSALLDVGQGHMAVFICTVDSYPLAHLSLFRGDHLLATNLEPQRPSHGRIQAKATANSLQLEVRELGLVDSGNYHCEATNILGSANSSLFFQVRGAWVQVSPSPELREGQAVVLSCQVPTGVSEGTSYSWYQDGRPLQESTSSTLRIAAISLRQAGAYHCQAQAPDTAIASLAAPVSLHVSYTPRHVTLSALLSTDPERLGHLVCSVQSDPPAQLQLFHRNRLVASTLQGADELAGSNPRLHVTVLPNELRLQIHFPELEDDGTYTCEASNTLGQASAAADFDAQAVRVTVWPNATVQEGQQVNLTCLVWSTHQDSLSYTWYKGGQQLLGARSITLPSVKVLDATSYRCGVGLPGHAPHLSRPVTLDVLHAPRNLRLTYLLETQGRQLALVLCTVDSRPPAQLTLSHGDQLVASSTEASVPNTLRLELQDPRPSNEGLYSCSAHSPLGKANTSLELLLEGVRVKMNPSGSVPEGEPVTVTCEDPAALSSALYAWFHNGHWLQEGPASSLQFLVTTRAHAGAYFCQVHDTQGTRSSRPASLQILYAPRDAVLSSFRDSRTRLMVVIQCTVDSEPPAEMVLSHNGKVLAASHERHSSASGIGHIQVARNALRLQVQDVTLGDGNTYVCTAQNTLGSISTTQRLLTETDIRVTAEPGLDVPEGTALNLSCLLPGGSGPTGNSSFTWFWNRHRLHSAPVPTLSFTPVVRAQAGLYHCRADLPTGATTSAPVMLRVLYPPKTPTLIVFVEPQGGHQGILDCRVDSEPLAILTLHRGSQLVASNQLHDAPTKPHIRVTAPPNALRVDIEELGPSNQGEYVCTASNTLGSASASAYFGTRALHQLQLFQRLLWVLGFLAGFLCLLLGLVAYHTWRKKSSTKLNEDENSAEMATKKNTIQEEVVAAL.

A signal peptide spans 1–19 (MCVLFSLLLLASVFSLGQT). In terms of domain architecture, Ig-like V-type spans 20–136 (TWGVSSPKNV…DVKGTTVTVT (117 aa)). The Extracellular segment spans residues 20 to 1639 (TWGVSSPKNV…ALHQLQLFQR (1620 aa)). Intrachain disulfides connect Cys36-Cys166, Cys41-Cys98, Cys160-Cys218, and Cys263-Cys306. N-acetylneuraminate-binding positions include Tyr63, Arg116, and 122 to 126 (SNRWL). Ig-like C2-type domains follow at residues 153-235 (GMER…YLQV), 239-321 (PKGV…SPLS), 326-406 (MAEV…SPLS), 416-508 (PDLT…LDFY), 509-594 (ANVA…TVLT), 602-701 (PTFT…ASFN), 704-781 (ATVL…AQLS), 795-890 (PKLS…FQVR), 894-973 (VQVS…APVS), 980-1079 (PRHV…ADFD), 1081-1161 (QAVR…RPVT), 1172-1264 (RLTY…MNPS), 1245-1337 (KANT…ASLQ), 1342-1439 (PRDA…RLLT), 1442-1520 (DIRV…ATTS), and 1534-1627 (PTLI…AYFG). Asn159 carries an N-linked (GlcNAc...) asparagine glycan. N-linked (GlcNAc...) asparagine glycans are attached at residues Asn266, Asn299, and Asn340. 2 disulfide bridges follow: Cys347/Cys391 and Cys434/Cys492. Asn500 carries N-linked (GlcNAc...) asparagine glycosylation. The cysteines at positions 532 and 576 are disulfide-linked. Asn583 carries an N-linked (GlcNAc...) asparagine glycan. Cys625 and Cys685 are disulfide-bonded. N-linked (GlcNAc...) asparagine glycans are attached at residues Asn693, Asn722, and Asn737. 2 disulfides stabilise this stretch: Cys725–Cys770 and Cys813–Cys872. A Cell attachment site motif is present at residues 827–829 (RGD). An N-linked (GlcNAc...) asparagine glycan is attached at Asn882. Cystine bridges form between Cys912–Cys956 and Cys1001–Cys1063. N-linked (GlcNAc...) asparagine glycosylation is found at Asn1090 and Asn1100. 2 cysteine pairs are disulfide-bonded: Cys1103–Cys1145 and Cys1189–Cys1237. A glycan (N-linked (GlcNAc...) asparagine) is linked at Asn1247. Cystine bridges form between Cys1277–Cys1320 and Cys1363–Cys1422. N-linked (GlcNAc...) asparagine glycans are attached at residues Asn1460 and Asn1474. Intrachain disulfides connect Cys1463-Cys1509 and Cys1552-Cys1611. The helical transmembrane segment at 1640–1660 (LLWVLGFLAGFLCLLLGLVAY) threads the bilayer. Over 1661–1695 (HTWRKKSSTKLNEDENSAEMATKKNTIQEEVVAAL) the chain is Cytoplasmic.

The protein belongs to the immunoglobulin superfamily. SIGLEC (sialic acid binding Ig-like lectin) family. In terms of assembly, interacts with CLEC10A. Detected in lymph node in the subcapsular sinus, interfollicular regions, and T and B-cell boundary (at protein level). Expressed by macrophages in various tissues. Highest expression in spleen and lymph node with lower amounts in lung, liver, bone marrow, heart and skin. No expression in thymus, kidney, brain or small intestine.

Its subcellular location is the cell membrane. It localises to the secreted. Functionally, macrophage-restricted adhesion molecule that mediates sialic-acid dependent binding to lymphocytes, including granulocytes, monocytes, natural killer cells, B-cells and CD8 T-cells. Plays a crucial role in limiting bacterial dissemination by engaging sialylated bacteria to promote effective phagocytosis and antigen presentation for the adaptive immune response. Mediates the uptake of various enveloped viruses via sialic acid recognition and subsequently induces the formation of intracellular compartments filled with virions (VCCs). In turn, enhances macrophage-to-T-cell transmission of several viruses including murine leukemia virus. Acts as an endocytic receptor mediating clathrin dependent endocytosis. Preferentially binds to alpha-2,3-linked sialic acid. Binds to SPN/CD43 on T-cells. May play a role in hemopoiesis. Plays a role in the inhibition of antiviral innate immune by promoting TBK1 degradation via TYROBP and TRIM27-mediated ubiquitination. The sequence is that of Sialoadhesin (Siglec1) from Mus musculus (Mouse).